A 388-amino-acid polypeptide reads, in one-letter code: Fetuin-B (388 aa).

An N-terminal signal peptide occupies residues 1–18; the sequence is MGLLRLLVLCTLAACCMA. Cystatin fetuin-B-type domains follow at residues 28 to 141 and 152 to 264; these read QRPL…YNCT and TTCP…VTCE. An N-linked (GlcNAc...) asparagine glycan is attached at asparagine 40. Intrachain disulfides connect cysteine 96/cysteine 107, cysteine 120/cysteine 140, cysteine 154/cysteine 157, cysteine 217/cysteine 224, and cysteine 237/cysteine 263. Residue asparagine 139 is glycosylated (N-linked (GlcNAc...) asparagine). Disordered regions lie at residues 270 to 343 and 367 to 388; these read AQVP…PQGD and KEQRSAECPGPEKENNPLVLPP. A compositionally biased stretch (polar residues) spans 279-300; sequence AVTQGPQKLPQKNTAPTSSPSV. O-linked (GalNAc...) threonine glycosylation is found at threonine 292 and threonine 295. Position 321 is a phosphoserine (serine 321). Residues 367–381 show a composition bias toward basic and acidic residues; the sequence is KEQRSAECPGPEKEN.

Belongs to the fetuin family. As to expression, liver, lung and tongue.

It is found in the secreted. Protease inhibitor required for egg fertilization. Required to prevent premature zona pellucida hardening before fertilization, probably by inhibiting the protease activity of ASTL, a protease that mediates the cleavage of ZP2 and triggers zona pellucida hardening. The protein is Fetuin-B (Fetub) of Mus musculus (Mouse).